A 345-amino-acid polypeptide reads, in one-letter code: Phenylalanine--tRNA ligase alpha subunit (345 aa).

Residue Glu262 participates in Mg(2+) binding.

Belongs to the class-II aminoacyl-tRNA synthetase family. Phe-tRNA synthetase alpha subunit type 1 subfamily. In terms of assembly, tetramer of two alpha and two beta subunits. Mg(2+) is required as a cofactor.

The protein resides in the cytoplasm. It catalyses the reaction tRNA(Phe) + L-phenylalanine + ATP = L-phenylalanyl-tRNA(Phe) + AMP + diphosphate + H(+). This is Phenylalanine--tRNA ligase alpha subunit from Ehrlichia canis (strain Jake).